The following is a 132-amino-acid chain: Small ribosomal subunit protein bS6 (132 aa).

Residues 99-132 form a disordered region; sequence ASPMVKAKDERRGDRREDFANETADDADAGDSEE. Over residues 104-117 the composition is skewed to basic and acidic residues; sequence KAKDERRGDRREDF. The segment covering 121 to 132 has biased composition (acidic residues); that stretch reads TADDADAGDSEE.

Belongs to the bacterial ribosomal protein bS6 family.

In terms of biological role, binds together with bS18 to 16S ribosomal RNA. In Serratia proteamaculans (strain 568), this protein is Small ribosomal subunit protein bS6.